The sequence spans 395 residues: Chorismate synthase (395 aa).

2 residues coordinate NADP(+): Arg-40 and Arg-46. Residues 134–136 (RAS), 256–257 (QA), Gly-301, 316–320 (KPIST), and Arg-342 each bind FMN.

Belongs to the chorismate synthase family. Homotetramer. FMNH2 is required as a cofactor.

It carries out the reaction 5-O-(1-carboxyvinyl)-3-phosphoshikimate = chorismate + phosphate. Its pathway is metabolic intermediate biosynthesis; chorismate biosynthesis; chorismate from D-erythrose 4-phosphate and phosphoenolpyruvate: step 7/7. Its function is as follows. Catalyzes the anti-1,4-elimination of the C-3 phosphate and the C-6 proR hydrogen from 5-enolpyruvylshikimate-3-phosphate (EPSP) to yield chorismate, which is the branch point compound that serves as the starting substrate for the three terminal pathways of aromatic amino acid biosynthesis. This reaction introduces a second double bond into the aromatic ring system. The polypeptide is Chorismate synthase (Beutenbergia cavernae (strain ATCC BAA-8 / DSM 12333 / CCUG 43141 / JCM 11478 / NBRC 16432 / NCIMB 13614 / HKI 0122)).